We begin with the raw amino-acid sequence, 537 residues long: Probable quinate permease (537 aa).

Residues 1–22 (MSILSLVEDRPTPKEVYNWKIY) lie on the Cytoplasmic side of the membrane. Residues 23–43 (LLAAVASCTSCMIGYDSAFIG) traverse the membrane as a helical segment. Residues 44–74 (TTISLQSFKDEFDWDSMSAAHQDLVSSNIVS) are Extracellular-facing. The helical transmembrane segment at 75–95 (LYQAGAFFGAFFAYPIGHFWG) threads the bilayer. Residues 96–97 (RK) are Cytoplasmic-facing. The chain crosses the membrane as a helical span at residues 98–118 (WGLMVSALIFTLGAGIMLGTN). Residues 119–130 (GDRGFGLLYGGR) lie on the Extracellular side of the membrane. The helical transmembrane segment at 131–151 (VLAGLGVGAGSNITPIYISEL) threads the bilayer. The Cytoplasmic segment spans residues 152–159 (SPPAIRGR). Residues 160–180 (LVGVYELGWQIGGLVGFWICY) form a helical membrane-spanning segment. Residues 181–193 (GVDETLPPSHKQW) are Extracellular-facing. Residues 194-214 (IIPFAVQLIPSGLLIIGALFL) traverse the membrane as a helical segment. Topologically, residues 215–285 (KESPRWLFLR…AWTNKKILYR (71 aa)) are cytoplasmic. The chain crosses the membrane as a helical span at residues 286-306 (LFLGSMLFFWQNGSGINAINY). The Extracellular segment spans residues 307-325 (YSPTVFKSIGVTGSNTSLF). Residues 326-346 (TTGIFGVVKTVVTFIWLLWLI) form a helical membrane-spanning segment. Residues 347–352 (DRVGRR) lie on the Cytoplasmic side of the membrane. A helical transmembrane segment spans residues 353–373 (LLLLIGAAGGSICLWIVGAYI). Residues 374 to 387 (KIARPSERENKQMD) are Extracellular-facing. A helical membrane pass occupies residues 388–408 (GGGIAAMFFFYLWTVFYTPSW). Topologically, residues 409–456 (NGTPWVINSEMFDPNIRSLAQACAAGSNWLWNFLISRFTPQMFAKMDY) are cytoplasmic. Residues 457 to 477 (GVYFFFASLMILSIIFVFFLI) traverse the membrane as a helical segment. Over 478–537 (PETKGIPLESMDRLFETQPIWRAHGTLLKQIREDEERFRHDLEDSGFVKSTDRQVEVVDA) the chain is Extracellular.

The protein belongs to the major facilitator superfamily. Sugar transporter (TC 2.A.1.1) family. As to quaternary structure, interacts with creB. Ubiquitinated. Deubiquitinated by creB, probably to control its activity or amount.

It is found in the cell membrane. Integral membrane transporter that imports quinic acid to be catabolized as a carbon source. This chain is Probable quinate permease (qutD), found in Aspergillus flavus (strain ATCC 200026 / FGSC A1120 / IAM 13836 / NRRL 3357 / JCM 12722 / SRRC 167).